The sequence spans 66 residues: DNA gyrase inhibitor YacG (66 aa).

4 residues coordinate Zn(2+): cysteine 9, cysteine 12, cysteine 28, and cysteine 32. The segment at 45–66 is disordered; that stretch reads HKIAGSQESEDELYSGDLEPRH.

Belongs to the DNA gyrase inhibitor YacG family. In terms of assembly, interacts with GyrB. The cofactor is Zn(2+).

In terms of biological role, inhibits all the catalytic activities of DNA gyrase by preventing its interaction with DNA. Acts by binding directly to the C-terminal domain of GyrB, which probably disrupts DNA binding by the gyrase. The chain is DNA gyrase inhibitor YacG from Pseudomonas putida (strain W619).